A 614-amino-acid chain; its full sequence is Probable ATP-dependent RNA helicase DDX5 (614 aa).

Basic and acidic residues predominate over residues 1-15; that stretch reads MSGYSSDRDRGRDRG. The disordered stretch occupies residues 1-39; it reads MSGYSSDRDRGRDRGFGAPRFGGSRAGPLSGKKFGNPGE. Residue S24 is modified to Phosphoserine. K32 carries the post-translational modification N6-acetyllysine; alternate. K32 is covalently cross-linked (Glycyl lysine isopeptide (Lys-Gly) (interchain with G-Cter in SUMO2); alternate). Residues K33 and K40 each carry the N6-acetyllysine modification. K45 is covalently cross-linked (Glycyl lysine isopeptide (Lys-Gly) (interchain with G-Cter in SUMO2)). K53 is covalently cross-linked (Glycyl lysine isopeptide (Lys-Gly) (interchain with G-Cter in SUMO2); alternate). K53 is covalently cross-linked (Glycyl lysine isopeptide (Lys-Gly) (interchain with G-Cter in SUMO); alternate). K53 is covalently cross-linked (Glycyl lysine isopeptide (Lys-Gly) (interchain with G-Cter in SUMO1); alternate). Residues 94–122 carry the Q motif motif; it reads LNFYEANFPANVMDVIARQNFTEPTAIQA. ATP is bound by residues 114–116, Q121, and 138–145; these read FTE and AQTGSGKT. The Helicase ATP-binding domain occupies 125–300; it reads WPVALSGLDM…EDFLKDYIHI (176 aa). K236 carries the N6-acetyllysine modification. Positions 248–251 match the DEAD box motif; it reads DEAD. Y297 is modified (phosphotyrosine). One can recognise a Helicase C-terminal domain in the interval 328 to 475; sequence KLIRLMEEIM…AINPKLLQLV (148 aa). Residues K340, K343, K388, K391, K411, K437, K451, and K470 each participate in a glycyl lysine isopeptide (Lys-Gly) (interchain with G-Cter in SUMO2) cross-link. A disordered region spans residues 477-504; the sequence is DRGSGRSRGRGGMKDDRRDRYSAGKRGG. The segment at 477–614 is transactivation domain; it reads DRGSGRSRGR…GYPMPTGYSQ (138 aa). S480 carries the phosphoserine modification. The span at 488–498 shows a compositional bias: basic and acidic residues; sequence GMKDDRRDRYS. At S520 the chain carries Phosphoserine. Residue K523 forms a Glycyl lysine isopeptide (Lys-Gly) (interchain with G-Cter in SUMO2) linkage.

This sequence belongs to the DEAD box helicase family. DDX5/DBP2 subfamily. In terms of assembly, identified in the spliceosome C complex. Component of a ribonucleoprotein complex containing mRNAs and RNA-binding proteins including DDX5, HNRNPH2 and SRSF1 as well as splicing regulator ARVCF. Interacts with RBM4; the interaction occurs in an RNA-independent manner. Interacts with AGO1 and AGO2. Interacts with ESR1, AR, EP300, CREBBP, POLR2A, TP53, RUNX2 and HDAC1. Self-associates. Interacts with DDX17. Interacts with BRDT. The large PER complex involved in the repression of transcriptional termination is composed of at least PER2, CDK9, DDX5, DHX9, NCBP1 and POLR2A (active). Interacts with DHX36; this interaction occurs in a RNA-dependent manner. Interacts with NUPR1. Interacts with ERCC6. Interacts with DDX3X in the cytoplasm; this interaction may be more efficient when both proteins are unphosphorylated. Post-translationally, arg-502 is dimethylated, probably to asymmetric dimethylarginine. Sumoylated; sumoylation, promoted by PIAS1, promotes interaction with HDAC1 and transcriptional repression activity. Sumoylation also significantly increases stability, and reduces polyubiquitination. In terms of processing, polyubiquitinated, leading to proteasomal degradation. Post-translationally, weakly phosphorylated in the G1/S phase of the cell cycle and much more at G2/M, especially at Thr and Tyr residues.

Its subcellular location is the nucleus. The protein localises to the nucleolus. It is found in the nucleus speckle. The protein resides in the cytoplasm. The enzyme catalyses ATP + H2O = ADP + phosphate + H(+). In terms of biological role, involved in the alternative regulation of pre-mRNA splicing; its RNA helicase activity is necessary for increasing tau exon 10 inclusion and occurs in a RBM4-dependent manner. Binds to the tau pre-mRNA in the stem-loop region downstream of exon 10. The rate of ATP hydrolysis is highly stimulated by single-stranded RNA. Involved in transcriptional regulation; the function is independent of the RNA helicase activity. Transcriptional coactivator for androgen receptor AR but probably not ESR1. Synergizes with DDX17 and SRA1 RNA to activate MYOD1 transcriptional activity and involved in skeletal muscle differentiation. Transcriptional coactivator for p53/TP53 and involved in p53/TP53 transcriptional response to DNA damage and p53/TP53-dependent apoptosis. Transcriptional coactivator for RUNX2 and involved in regulation of osteoblast differentiation. Acts as a transcriptional repressor in a promoter-specific manner; the function probably involves association with histone deacetylases, such as HDAC1. As component of a large PER complex is involved in the inhibition of 3' transcriptional termination of circadian target genes such as PER1 and NR1D1 and the control of the circadian rhythms. The sequence is that of Probable ATP-dependent RNA helicase DDX5 (DDX5) from Homo sapiens (Human).